The sequence spans 79 residues: Sec-independent protein translocase protein TatA (79 aa).

Residues 1–21 traverse the membrane as a helical segment; that stretch reads MGEFSLTHILLLAVIFLIFFG. Residues 52 to 79 are disordered; sequence DIHDNQQVSHQNKQSMGQTQKQGENQNS. The segment covering 56–79 has biased composition (polar residues); sequence NQQVSHQNKQSMGQTQKQGENQNS.

Belongs to the TatA/E family. In terms of assembly, the Tat system comprises two distinct complexes: a TatABC complex, containing multiple copies of TatA, TatB and TatC subunits, and a separate TatA complex, containing only TatA subunits. Substrates initially bind to the TatABC complex, which probably triggers association of the separate TatA complex to form the active translocon.

It is found in the cell inner membrane. Functionally, part of the twin-arginine translocation (Tat) system that transports large folded proteins containing a characteristic twin-arginine motif in their signal peptide across membranes. TatA could form the protein-conducting channel of the Tat system. This chain is Sec-independent protein translocase protein TatA, found in Bdellovibrio bacteriovorus (strain ATCC 15356 / DSM 50701 / NCIMB 9529 / HD100).